The primary structure comprises 233 residues: Ribonuclease 3 (233 aa).

The RNase III domain maps to 4–126 (LNKLMERLGH…IVGAIYIDAG (123 aa)). Glu39 is a binding site for Mg(2+). Asp43 is an active-site residue. The Mg(2+) site is built by Asp112 and Glu115. The active site involves Glu115. The DRBM domain occupies 153–222 (DAKSLLQEWL…AKRFLELLDD (70 aa)).

Belongs to the ribonuclease III family. In terms of assembly, homodimer. Requires Mg(2+) as cofactor.

It is found in the cytoplasm. It catalyses the reaction Endonucleolytic cleavage to 5'-phosphomonoester.. Its function is as follows. Digests double-stranded RNA. Involved in the processing of primary rRNA transcript to yield the immediate precursors to the large and small rRNAs (23S and 16S). Processes some mRNAs, and tRNAs when they are encoded in the rRNA operon. Processes pre-crRNA and tracrRNA of type II CRISPR loci if present in the organism. In Coxiella burnetii (strain CbuK_Q154) (Coxiella burnetii (strain Q154)), this protein is Ribonuclease 3.